The primary structure comprises 410 residues: Polyadenylation and cleavage factor homolog 5 (410 aa).

Residues 1-17 (MASNGSFSAQRNANAGT) are compositionally biased toward polar residues. Positions 1 to 32 (MASNGSFSAQRNANAGTTMKRRNDNRGYGGGI) are disordered. The stretch at 191–214 (SKELTDLLSLLNNEKEKKTSEASN) forms a coiled coil. Residues 247–269 (RQCTSCGVRFKCQEEHSKHMDWH) form a C2H2-type zinc finger.

Forms a complex with cleavage and polyadenylation specificity factor (CPSF) subunits CSTF77, CLPS3, PCFS4 and PCFS1.

It is found in the nucleus. The protein is Polyadenylation and cleavage factor homolog 5 of Arabidopsis thaliana (Mouse-ear cress).